Reading from the N-terminus, the 610-residue chain is UvrABC system protein C (610 aa).

Positions 16 to 94 constitute a GIY-YIG domain; that stretch reads SQPGVYRMYD…IKLYQPRYNV (79 aa). The UVR domain maps to 204 to 239; it reads DQVLTQLISRMETASQNLEFEEAARIRDQIQAVRRV.

It belongs to the UvrC family. In terms of assembly, interacts with UvrB in an incision complex.

It is found in the cytoplasm. Functionally, the UvrABC repair system catalyzes the recognition and processing of DNA lesions. UvrC both incises the 5' and 3' sides of the lesion. The N-terminal half is responsible for the 3' incision and the C-terminal half is responsible for the 5' incision. This chain is UvrABC system protein C, found in Escherichia coli O45:K1 (strain S88 / ExPEC).